The chain runs to 153 residues: Sperm surface protein Sp17 (153 aa).

The disordered stretch occupies residues 74-117 (FKVPSGATESKEAPPEKSEPEKETPQEVVKEQETQVSFVEEVST). Residues 82–106 (ESKEAPPEKSEPEKETPQEVVKEQE) are compositionally biased toward basic and acidic residues. In terms of domain architecture, IQ spans 122–151 (AAAAAVKIQAAFRGHKARKEVKIMKESSIE).

As to quaternary structure, homodimer. May interact with ROPN1. As to expression, testis- and sperm-specific.

It is found in the membrane. Functionally, sperm surface zona pellucida binding protein. Helps to bind spermatozoa to the zona pellucida with high affinity. Might function in binding zona pellucida and carbohydrates. This is Sperm surface protein Sp17 (SPA17) from Notamacropus eugenii (Tammar wallaby).